Consider the following 208-residue polypeptide: Small ribosomal subunit protein uS4 (208 aa).

Residues 98-161 form the S4 RNA-binding domain; sequence QRLDNVVFRM…KSNPQVVRAL (64 aa).

It belongs to the universal ribosomal protein uS4 family. Part of the 30S ribosomal subunit. Contacts protein S5. The interaction surface between S4 and S5 is involved in control of translational fidelity.

Functionally, one of the primary rRNA binding proteins, it binds directly to 16S rRNA where it nucleates assembly of the body of the 30S subunit. Its function is as follows. With S5 and S12 plays an important role in translational accuracy. This is Small ribosomal subunit protein uS4 from Aliarcobacter butzleri (strain RM4018) (Arcobacter butzleri).